The following is a 400-amino-acid chain: Ribosomal RNA large subunit methyltransferase I (400 aa).

Residues 6–84 (FPRLVLAKGR…NEAIDSAFFE (79 aa)) enclose the PUA domain.

It belongs to the methyltransferase superfamily. RlmI family.

The protein localises to the cytoplasm. The catalysed reaction is cytidine(1962) in 23S rRNA + S-adenosyl-L-methionine = 5-methylcytidine(1962) in 23S rRNA + S-adenosyl-L-homocysteine + H(+). In terms of biological role, specifically methylates the cytosine at position 1962 (m5C1962) of 23S rRNA. This is Ribosomal RNA large subunit methyltransferase I from Klebsiella pneumoniae subsp. pneumoniae (strain ATCC 700721 / MGH 78578).